The sequence spans 316 residues: Melanocyte-stimulating hormone receptor (316 aa).

The Extracellular portion of the chain corresponds to 1-37 (MPMQGAQRKLLGSLNSTPTATSNLGLAANHTGAPCLE). Asn-29 is a glycosylation site (N-linked (GlcNAc...) asparagine). The chain crosses the membrane as a helical span at residues 38–63 (VSIPDGLFLSLGLVSLVENMLVVAAI). The Cytoplasmic segment spans residues 64–72 (AKNRNLHSP). A helical transmembrane segment spans residues 73 to 93 (MYCFICCLALSDLLVSGSNML). Residues 94-118 (ETAVVVLLEAGALATRASVVQQLHN) are Extracellular-facing. Residues 119-140 (TIDVLTYSSMLCSLCFVGAIAV) form a helical membrane-spanning segment. Over 141 to 163 (DRYISIFYALRYHSIMTLPRVQR) the chain is Cytoplasmic. A helical membrane pass occupies residues 164–183 (VIAAIWVASVTSSTLFITYY). At 184–191 (EHVVALLC) the chain is on the extracellular side. The chain crosses the membrane as a helical span at residues 192–210 (LVVFLTMLVLMAVLYVHML). Residues 211 to 239 (ARACQHAQGITRLHKRQPPAHQGFGLRGA) lie on the Cytoplasmic side of the membrane. The helical transmembrane segment at 240-265 (ATLTILLGIFFLCWGPFFLHLTLVVF) threads the bilayer. Residues 266–278 (CPQHLTCSCIFKN) are Extracellular-facing. The helical transmembrane segment at 279-299 (FKVFLTLIICNTIIDPLIYAF) threads the bilayer. Topologically, residues 300-316 (RSQELCRTLKEVLLCSW) are cytoplasmic. Cys-314 is lipidated: S-palmitoyl cysteine.

This sequence belongs to the G-protein coupled receptor 1 family. As to quaternary structure, interacts with MGRN1, but does not undergo MGRN1-mediated ubiquitination; this interaction competes with GNAS-binding and thus inhibits agonist-induced cAMP production. Interacts with OPN3; the interaction results in a decrease in MC1R-mediated cAMP signaling and ultimately a decrease in melanin production in melanocytes.

It localises to the cell membrane. Functionally, receptor for MSH (alpha, beta and gamma) and ACTH. The activity of this receptor is mediated by G proteins which activate adenylate cyclase. Mediates melanogenesis, the production of eumelanin (black/brown) and phaeomelanin (red/yellow), via regulation of cAMP signaling in melanocytes. This Cebus albifrons (White-fronted capuchin) protein is Melanocyte-stimulating hormone receptor (MC1R).